Here is a 272-residue protein sequence, read N- to C-terminus: MLTKRIIPCLDIKEGRVVKGTNFLELRDAGDPVELSKIYNEQGADELVFLDITASFEKRDIIIDVVKRTAEQVFIPLTVGGGIKTVEDFRRILRAGADKISINTSAVKNPELIKEASEIFGTQCVVVAIDVKRNYINDSNDKNLSGKYIFESKNGKFWFEVYIYGGREGTGIDAINWAKKVENLGAGEILLTSMDADGTKDGYDITLTKAISESVKLPVIASGGCGSSAHVVEVFKNGNADAALMASILHYRETDVQKIKKEVQKNNIPVRI.

Active-site residues include aspartate 11 and aspartate 130.

It belongs to the HisA/HisF family. In terms of assembly, heterodimer of HisH and HisF.

It is found in the cytoplasm. The catalysed reaction is 5-[(5-phospho-1-deoxy-D-ribulos-1-ylimino)methylamino]-1-(5-phospho-beta-D-ribosyl)imidazole-4-carboxamide + L-glutamine = D-erythro-1-(imidazol-4-yl)glycerol 3-phosphate + 5-amino-1-(5-phospho-beta-D-ribosyl)imidazole-4-carboxamide + L-glutamate + H(+). It functions in the pathway amino-acid biosynthesis; L-histidine biosynthesis; L-histidine from 5-phospho-alpha-D-ribose 1-diphosphate: step 5/9. Its function is as follows. IGPS catalyzes the conversion of PRFAR and glutamine to IGP, AICAR and glutamate. The HisF subunit catalyzes the cyclization activity that produces IGP and AICAR from PRFAR using the ammonia provided by the HisH subunit. This Methanococcus vannielii (strain ATCC 35089 / DSM 1224 / JCM 13029 / OCM 148 / SB) protein is Imidazole glycerol phosphate synthase subunit HisF.